Consider the following 528-residue polypeptide: Butyrophilin subfamily 2 member A2 (528 aa).

Positions 1-29 are cleaved as a signal peptide; sequence MESAAALHFSRPASLLLLLLLSLCALVSA. Residues 30 to 249 are Extracellular-facing; sequence QVTVVGPTDP…SFMPSVSPCA (220 aa). The region spanning 31–142 is the Ig-like V-type domain; sequence VTVVGPTDPI…SYDEAILHLI (112 aa). 3 N-linked (GlcNAc...) asparagine glycosylation sites follow: Asn47, Asn115, and Asn121. Cysteines 52 and 126 form a disulfide. Residues 150–232 enclose the Ig-like C2-type domain; it reads PLIEMRGHED…NNTLLSQKKE (83 aa). A helical membrane pass occupies residues 250-270; that stretch reads VALPIVVVILMILFAVCMYWI. A coiled-coil region spans residues 270 to 320; sequence INKLQKEKKILSGEKEFERETREIAVKELEKERVQKEEELQVKEKLQEELR. Topologically, residues 271-528 are cytoplasmic; it reads NKLQKEKKIL…LHRVGTHQSL (258 aa). Positions 311–507 constitute a B30.2/SPRY domain; sequence VKEKLQEELR…IFICPALTGA (197 aa).

This sequence belongs to the immunoglobulin superfamily. BTN/MOG family. Post-translationally, N-glycosylated.

The protein resides in the membrane. Inhibits the proliferation of CD4 and CD8 T-cells activated by anti-CD3 antibodies, T-cell metabolism and IL2 and IFNG secretion. The sequence is that of Butyrophilin subfamily 2 member A2 (BTN2A2) from Pongo abelii (Sumatran orangutan).